A 93-amino-acid polypeptide reads, in one-letter code: Small ribosomal subunit protein uS19 (93 aa).

It belongs to the universal ribosomal protein uS19 family.

Protein S19 forms a complex with S13 that binds strongly to the 16S ribosomal RNA. This Mycobacterium leprae (strain TN) protein is Small ribosomal subunit protein uS19 (rpsS).